Consider the following 714-residue polypeptide: Fatty acid oxidation complex subunit alpha (714 aa).

Residues 1–190 (MEMASAFTLN…KLGLVDDVVP (190 aa)) are enoyl-CoA hydratase. Residues 306–714 (APLNSVGILG…FWKTTATDLQ (409 aa)) are 3-hydroxyacyl-CoA dehydrogenase.

It in the N-terminal section; belongs to the enoyl-CoA hydratase/isomerase family. The protein in the central section; belongs to the 3-hydroxyacyl-CoA dehydrogenase family. In terms of assembly, heterotetramer of two alpha chains (FadJ) and two beta chains (FadI).

It is found in the cytoplasm. The enzyme catalyses a (3S)-3-hydroxyacyl-CoA = a (2E)-enoyl-CoA + H2O. The catalysed reaction is a 4-saturated-(3S)-3-hydroxyacyl-CoA = a (3E)-enoyl-CoA + H2O. It catalyses the reaction a (3S)-3-hydroxyacyl-CoA + NAD(+) = a 3-oxoacyl-CoA + NADH + H(+). It carries out the reaction (3S)-3-hydroxybutanoyl-CoA = (3R)-3-hydroxybutanoyl-CoA. The protein operates within lipid metabolism; fatty acid beta-oxidation. In terms of biological role, catalyzes the formation of a hydroxyacyl-CoA by addition of water on enoyl-CoA. Also exhibits 3-hydroxyacyl-CoA epimerase and 3-hydroxyacyl-CoA dehydrogenase activities. This Escherichia coli (strain SMS-3-5 / SECEC) protein is Fatty acid oxidation complex subunit alpha.